The following is a 504-amino-acid chain: Maturase K (504 aa).

Belongs to the intron maturase 2 family. MatK subfamily.

It localises to the plastid. It is found in the chloroplast. In terms of biological role, usually encoded in the trnK tRNA gene intron. Probably assists in splicing its own and other chloroplast group II introns. This is Maturase K from Actinidia deliciosa (Kiwi).